The sequence spans 291 residues: uncharacterized protein (291 aa).

Residues 191–289 form the HTH araC/xylS-type domain; it reads KQMLNWIHLH…NMTPLSYKKM (99 aa). DNA-binding regions (H-T-H motif) lie at residues 208 to 229 and 256 to 279; these read EDIAKAGQLSRSECCRYFKRML and VTEVSYQVGFNSTSYFISKFQQAM.

This is an uncharacterized protein from Bacillus subtilis (strain 168).